A 625-amino-acid chain; its full sequence is Mesothelin (625 aa).

Residues methionine 1 to leucine 35 form the signal peptide. N-linked (GlcNAc...) asparagine glycosylation occurs at asparagine 93. Serine 202 bears the Phosphoserine mark. A disulfide bridge links cysteine 304 with cysteine 328. Asparagine 390, asparagine 488, and asparagine 517 each carry an N-linked (GlcNAc...) asparagine glycan. Residue serine 600 is the site of GPI-anchor amidated serine attachment. Residues serine 601–serine 625 constitute a propeptide, removed in mature form.

The protein belongs to the mesothelin family. In terms of assembly, interacts with MUC16. In terms of processing, proteolytically cleaved by a furin-like convertase to generate megakaryocyte-potentiating factor (MPF), and the cleaved form of mesothelin. In terms of tissue distribution, highly expressed in lung and heart. Expressed at low levels in spleen, liver, kidney and testis. Present in lung (at protein level).

It localises to the cell membrane. The protein resides in the golgi apparatus. Its subcellular location is the secreted. Its function is as follows. Membrane-anchored forms may play a role in cellular adhesion. Functionally, megakaryocyte-potentiating factor (MPF) may potentiate megakaryocyte colony formation. This chain is Mesothelin (Msln), found in Mus musculus (Mouse).